We begin with the raw amino-acid sequence, 597 residues long: Hydrogenase-1 large chain (597 aa).

Cys-76, Cys-79, Cys-576, and Cys-579 together coordinate Ni(2+).

Belongs to the [NiFe]/[NiFeSe] hydrogenase large subunit family. Heterodimer of a large and a small subunit. Ni(2+) serves as cofactor.

The protein resides in the cell membrane. It carries out the reaction H2 + A = AH2. Functionally, this is one of three E.coli hydrogenases synthesized in response to different physiological conditions. HYD1 is believed to have a role in hydrogen cycling during fermentative growth. The polypeptide is Hydrogenase-1 large chain (hyaB) (Escherichia coli (strain K12)).